The primary structure comprises 240 residues: tRNA (guanine-N(7)-)-methyltransferase (240 aa).

Positions 71, 96, 123, and 146 each coordinate S-adenosyl-L-methionine. Asp-146 is a catalytic residue. Substrate-binding positions include Lys-150, Asp-182, and Thr-219 to Glu-222.

This sequence belongs to the class I-like SAM-binding methyltransferase superfamily. TrmB family.

It carries out the reaction guanosine(46) in tRNA + S-adenosyl-L-methionine = N(7)-methylguanosine(46) in tRNA + S-adenosyl-L-homocysteine. It participates in tRNA modification; N(7)-methylguanine-tRNA biosynthesis. Its function is as follows. Catalyzes the formation of N(7)-methylguanine at position 46 (m7G46) in tRNA. In Hydrogenovibrio crunogenus (strain DSM 25203 / XCL-2) (Thiomicrospira crunogena), this protein is tRNA (guanine-N(7)-)-methyltransferase.